The following is a 338-amino-acid chain: Lipoate-protein ligase A (338 aa).

Residues 29–216 form the BPL/LPL catalytic domain; the sequence is PATQRVLFLW…AFFSHYGERV (188 aa). ATP-binding positions include R71, 76 to 79, and K134; that span reads GAVF. K134 provides a ligand contact to (R)-lipoate.

It belongs to the LplA family. As to quaternary structure, monomer.

The protein localises to the cytoplasm. The catalysed reaction is L-lysyl-[lipoyl-carrier protein] + (R)-lipoate + ATP = N(6)-[(R)-lipoyl]-L-lysyl-[lipoyl-carrier protein] + AMP + diphosphate + H(+). It participates in protein modification; protein lipoylation via exogenous pathway; protein N(6)-(lipoyl)lysine from lipoate: step 1/2. Its pathway is protein modification; protein lipoylation via exogenous pathway; protein N(6)-(lipoyl)lysine from lipoate: step 2/2. Catalyzes both the ATP-dependent activation of exogenously supplied lipoate to lipoyl-AMP and the transfer of the activated lipoyl onto the lipoyl domains of lipoate-dependent enzymes. This Klebsiella pneumoniae (strain 342) protein is Lipoate-protein ligase A.